A 271-amino-acid chain; its full sequence is 3-methyl-2-oxobutanoate hydroxymethyltransferase (271 aa).

Positions 53 and 92 each coordinate Mg(2+). Residues 53-54, Asp-92, and Lys-120 each bind 3-methyl-2-oxobutanoate; that span reads DS. Glu-122 provides a ligand contact to Mg(2+). Glu-189 serves as the catalytic Proton acceptor.

This sequence belongs to the PanB family. Homodecamer; pentamer of dimers. Requires Mg(2+) as cofactor.

The protein localises to the cytoplasm. The catalysed reaction is 3-methyl-2-oxobutanoate + (6R)-5,10-methylene-5,6,7,8-tetrahydrofolate + H2O = 2-dehydropantoate + (6S)-5,6,7,8-tetrahydrofolate. The protein operates within cofactor biosynthesis; (R)-pantothenate biosynthesis; (R)-pantoate from 3-methyl-2-oxobutanoate: step 1/2. In terms of biological role, catalyzes the reversible reaction in which hydroxymethyl group from 5,10-methylenetetrahydrofolate is transferred onto alpha-ketoisovalerate to form ketopantoate. This is 3-methyl-2-oxobutanoate hydroxymethyltransferase from Paraburkholderia phymatum (strain DSM 17167 / CIP 108236 / LMG 21445 / STM815) (Burkholderia phymatum).